The following is a 238-amino-acid chain: Complement C1q-like protein 4 (238 aa).

The first 15 residues, 1-15 (MVLLLLVAIPLLVHS), serve as a signal peptide directing secretion. The segment at 36–101 (GPRGPGPDGA…PPGPGPGGVA (66 aa)) is disordered. In terms of domain architecture, Collagen-like spans 53 to 96 (PPGAKGEVGRRGKAGLRGPPGPPGPRGPPGEPGRPGPPGPPGPG). Over residues 71–96 (PPGPPGPRGPPGEPGRPGPPGPPGPG) the composition is skewed to pro residues. The 134-residue stretch at 105–238 (GYVPRIAFYA…TFSGFIIYPD (134 aa)) folds into the C1q domain.

In terms of assembly, forms homooligomers, predominantly dimers or trimers. Forms heterooligomers with C1QL1, C1QL2 and C1QL3, when proteins are coexpressed; this interaction does not occur after secretion. Interacts with ADGRB3. As to expression, highest expression levels in testis and adipose tissue, lower levels in skeletal muscle and kidney.

The protein resides in the secreted. May regulate the number of excitatory synapses that are formed on hippocampus neurons. Has no effect on inhibitory synapses. May inhibit adipocyte differentiation at an early stage of the process. This chain is Complement C1q-like protein 4 (C1QL4), found in Homo sapiens (Human).